A 280-amino-acid polypeptide reads, in one-letter code: Ribosomal RNA small subunit methyltransferase A (280 aa).

His-15, Leu-17, Gly-42, Glu-64, Asp-89, and Asn-109 together coordinate S-adenosyl-L-methionine.

It belongs to the class I-like SAM-binding methyltransferase superfamily. rRNA adenine N(6)-methyltransferase family. RsmA subfamily.

The protein resides in the cytoplasm. The enzyme catalyses adenosine(1518)/adenosine(1519) in 16S rRNA + 4 S-adenosyl-L-methionine = N(6)-dimethyladenosine(1518)/N(6)-dimethyladenosine(1519) in 16S rRNA + 4 S-adenosyl-L-homocysteine + 4 H(+). Specifically dimethylates two adjacent adenosines (A1518 and A1519) in the loop of a conserved hairpin near the 3'-end of 16S rRNA in the 30S particle. May play a critical role in biogenesis of 30S subunits. The polypeptide is Ribosomal RNA small subunit methyltransferase A (Synechococcus sp. (strain WH7803)).